The chain runs to 764 residues: Metabotropic glutamate receptor-like protein H (764 aa).

Residues 1 to 20 (MKNILKILILILICINKINC) form the signal peptide. Residues 21–393 (LDGDGKQFRM…EVEFSQSIQN (373 aa)) are Extracellular-facing. 5 N-linked (GlcNAc...) asparagine glycosylation sites follow: Asn-72, Asn-260, Asn-278, Asn-344, and Asn-379. A helical transmembrane segment spans residues 394-414 (GFSITTGILIGITILMMIGII). Residues 415–427 (KYSKTPSMRSASP) lie on the Cytoplasmic side of the membrane. The helical transmembrane segment at 428–448 (IFLNFILAGGIIVYIGIIVWV) threads the bilayer. Residues 449–464 (GPMSTHSCNARLWLVT) are Extracellular-facing. Residues 465-485 (LGFSTLIGSLVVKNFRIWLIF) traverse the membrane as a helical segment. Residues 486-500 (DNPELKSIKITNYQL) are Cytoplasmic-facing. A helical membrane pass occupies residues 501-521 (FPWVGACLVINIILMAILTSV). The Extracellular portion of the chain corresponds to 522-552 (GDLKQIDAMNIDSLGKYEYMKVCKMNSSGAS). The N-linked (GlcNAc...) asparagine glycan is linked to Asn-547. A helical membrane pass occupies residues 553-573 (TLYTILAYFAALLLVGVFVSW). Residues 574–587 (KIRIVDILEFNESG) are Cytoplasmic-facing. The helical transmembrane segment at 588 to 608 (AIANTLYAISFCLFVIVPLMI) threads the bilayer. Topologically, residues 609 to 617 (SPQDMQSET) are extracellular. Residues 618-638 (IILCTTGLFITTAALLIIFIP) form a helical membrane-spanning segment. Residues 639-764 (KFWRVFRKGA…IIVNDSENNN (126 aa)) lie on the Cytoplasmic side of the membrane. The tract at residues 664 to 764 (ATARAESGSK…IIVNDSENNN (101 aa)) is disordered. Over residues 671-690 (GSKGSNGNASSGNRTNRRGN) the composition is skewed to low complexity. The span at 707–719 (ENQKEKEKIKDDV) shows a compositional bias: basic and acidic residues. The span at 731-748 (FTDEASDTDNNEFNDIEL) shows a compositional bias: acidic residues.

The protein in the N-terminal section; belongs to the BMP lipoprotein family. In the C-terminal section; belongs to the G-protein coupled receptor 3 family. GABA-B receptor subfamily.

Its subcellular location is the membrane. This is Metabotropic glutamate receptor-like protein H (grlH) from Dictyostelium discoideum (Social amoeba).